We begin with the raw amino-acid sequence, 176 residues long: Interleukin-1 receptor antagonist protein (176 aa).

The first 25 residues, 1 to 25 (METCRCPLSYLISFLLFLSHSETAC), serve as a signal peptide directing secretion. An intrachain disulfide couples Cys-91 to Cys-141. Asn-109 carries an N-linked (GlcNAc...) asparagine glycan.

Belongs to the IL-1 family.

The protein resides in the secreted. In terms of biological role, anti-inflammatory antagonist of interleukin-1 family of proinflammatory cytokines such as interleukin-1beta/IL1B and interleukin-1alpha/IL1A. Protects from immune dysregulation and uncontrolled systemic inflammation triggered by IL1 for a range of innate stimulatory agents such as pathogens. This chain is Interleukin-1 receptor antagonist protein (IL1RN), found in Canis lupus familiaris (Dog).